The primary structure comprises 991 residues: Mediator of RNA polymerase II transcription subunit 5 (991 aa).

This sequence belongs to the Mediator complex subunit 5 family. Component of the Mediator complex.

It localises to the nucleus. Functionally, component of the Mediator complex, a coactivator involved in the regulated transcription of nearly all RNA polymerase II-dependent genes. Mediator functions as a bridge to convey information from gene-specific regulatory proteins to the basal RNA polymerase II transcription machinery. Mediator is recruited to promoters by direct interactions with regulatory proteins and serves as a scaffold for the assembly of a functional preinitiation complex with RNA polymerase II and the general transcription factors. The chain is Mediator of RNA polymerase II transcription subunit 5 (NUT1) from Yarrowia lipolytica (strain CLIB 122 / E 150) (Yeast).